A 329-amino-acid chain; its full sequence is Glycerol-3-phosphate dehydrogenase [NAD(P)+] (329 aa).

NADPH contacts are provided by Trp-11 and Lys-101. The sn-glycerol 3-phosphate site is built by Lys-101, Gly-132, and Ser-134. Ala-136 is a binding site for NADPH. Sn-glycerol 3-phosphate is bound by residues Lys-188, Asp-241, Ser-251, Arg-252, and Asn-253. Lys-188 serves as the catalytic Proton acceptor. Arg-252 lines the NADPH pocket. Positions 276 and 278 each coordinate NADPH.

Belongs to the NAD-dependent glycerol-3-phosphate dehydrogenase family.

Its subcellular location is the cytoplasm. The enzyme catalyses sn-glycerol 3-phosphate + NAD(+) = dihydroxyacetone phosphate + NADH + H(+). The catalysed reaction is sn-glycerol 3-phosphate + NADP(+) = dihydroxyacetone phosphate + NADPH + H(+). It functions in the pathway membrane lipid metabolism; glycerophospholipid metabolism. Its function is as follows. Catalyzes the reduction of the glycolytic intermediate dihydroxyacetone phosphate (DHAP) to sn-glycerol 3-phosphate (G3P), the key precursor for phospholipid synthesis. This is Glycerol-3-phosphate dehydrogenase [NAD(P)+] from Phytoplasma australiense.